Consider the following 71-residue polypeptide: Bacteriocin carnobacteriocin-A (71 aa).

Residues M1–G18 constitute a propeptide that is removed on maturation. C40 and C69 are oxidised to a cystine.

The protein localises to the secreted. Its function is as follows. Has antibacterial activity. This chain is Bacteriocin carnobacteriocin-A (cbnBA), found in Carnobacterium maltaromaticum (Carnobacterium piscicola).